A 22-amino-acid chain; its full sequence is Ocellatin-LB1 (22 aa).

Residue methionine 22 is modified to Methionine amide.

In terms of tissue distribution, expressed by the skin glands.

It is found in the secreted. Antibacterial peptide that inhibits Gram-negative bacteria A.actinomycetemcomitans ATCC 29522 (MIC=222.37 uM) and E.coli ATCC 25922 (MIC=114.04 uM). Also has antifungal activity against C.albicans ATCC 18804 (MIC=233.55 uM) and C.lusitaniae ATCC 56936 (MIC=233.55 uM). No activity against the Gram-positive bacterium S.aureus ATCC 25923. Shows virtually no hemolytic activity towards rabbit erythrocytes. This chain is Ocellatin-LB1, found in Leptodactylus labyrinthicus (Labyrinth frog).